The sequence spans 873 residues: Tyrosine-protein kinase receptor TYRO3 (873 aa).

The signal sequence occupies residues 1–28 (MELRRSMALPRLLLLGLWAAALRDGAVA). 2 consecutive Ig-like C2-type domains span residues 29-116 (AGMK…KEES) and 127-208 (PYFT…ATVQ). The Extracellular segment spans residues 29–416 (AGMKFTGSPI…QRQPPYGTSW (388 aa)). N-linked (GlcNAc...) asparagine glycosylation is present at Asn51. Disulfide bonds link Cys52-Cys105 and Cys148-Cys191. 7 N-linked (GlcNAc...) asparagine glycosylation sites follow: Asn179, Asn184, Asn218, Asn228, Asn281, Asn353, and Asn367. 2 consecutive Fibronectin type-III domains span residues 215–308 (PPLN…TLEL) and 310–403 (PSST…AQEV). A helical membrane pass occupies residues 417–437 (VPVALGILTALVTAVALALIL). Topologically, residues 438–873 (LRKRRKETRF…ELETEGEKSC (436 aa)) are cytoplasmic. One can recognise a Protein kinase domain in the interval 505-776 (FTLGRMLGKG…GVLRSQLEMI (272 aa)). Residues 511–519 (LGKGEFGSV) and Lys537 each bind ATP. Asp642 (proton acceptor) is an active-site residue. Phosphotyrosine; by autocatalysis is present on Tyr673. The interval 845 to 873 (VEGERHPEGQEGENKSLLYELETEGEKSC) is disordered. Residues 847-858 (GERHPEGQEGEN) show a composition bias toward basic and acidic residues.

It belongs to the protein kinase superfamily. Tyr protein kinase family. AXL/UFO subfamily. Post-translationally, autophosphorylated on tyrosine residues. Detected in embryonic retina (at protein level). detected in brain, retina, kidney and in retinal Mueller glia-like cells.

The protein resides in the cell membrane. The catalysed reaction is L-tyrosyl-[protein] + ATP = O-phospho-L-tyrosyl-[protein] + ADP + H(+). Its function is as follows. Receptor tyrosine kinase that transduces signals from the extracellular matrix into the cytoplasm by binding to several ligands. Regulates many physiological processes including cell survival, migration and differentiation. Ligand binding at the cell surface induces dimerization and autophosphorylation of TYRO3 on its intracellular domain that provides docking sites for downstream signaling molecules. Following activation by ligand, enhances PI3-kinase activity and activates the AKT survival pathway, including nuclear translocation of NF-kappa-B and up-regulation of transcription of NF-kappa-B-regulated genes. This chain is Tyrosine-protein kinase receptor TYRO3 (TYRO3), found in Gallus gallus (Chicken).